The primary structure comprises 426 residues: Enolase (426 aa).

Q163 contacts (2R)-2-phosphoglycerate. Residue E205 is the Proton donor of the active site. Mg(2+) is bound by residues D242, E283, and D310. (2R)-2-phosphoglycerate contacts are provided by K335, R364, S365, and K386. The active-site Proton acceptor is K335.

The protein belongs to the enolase family. It depends on Mg(2+) as a cofactor.

The protein resides in the cytoplasm. It is found in the secreted. It localises to the cell surface. It carries out the reaction (2R)-2-phosphoglycerate = phosphoenolpyruvate + H2O. It participates in carbohydrate degradation; glycolysis; pyruvate from D-glyceraldehyde 3-phosphate: step 4/5. Functionally, catalyzes the reversible conversion of 2-phosphoglycerate (2-PG) into phosphoenolpyruvate (PEP). It is essential for the degradation of carbohydrates via glycolysis. This chain is Enolase, found in Beutenbergia cavernae (strain ATCC BAA-8 / DSM 12333 / CCUG 43141 / JCM 11478 / NBRC 16432 / NCIMB 13614 / HKI 0122).